Consider the following 278-residue polypeptide: Pantothenate synthetase (278 aa).

An ATP-binding site is contributed by 26–33; it reads MGNLHEGH. The active-site Proton donor is the His-33. Gln-57 is a (R)-pantoate binding site. Gln-57 is a beta-alanine binding site. Residue 144–147 participates in ATP binding; the sequence is GKKD. Gln-150 contributes to the (R)-pantoate binding site. ATP is bound by residues Gly-173 and 181-184; that span reads LSSR.

It belongs to the pantothenate synthetase family. As to quaternary structure, homodimer.

The protein localises to the cytoplasm. It catalyses the reaction (R)-pantoate + beta-alanine + ATP = (R)-pantothenate + AMP + diphosphate + H(+). The protein operates within cofactor biosynthesis; (R)-pantothenate biosynthesis; (R)-pantothenate from (R)-pantoate and beta-alanine: step 1/1. Its function is as follows. Catalyzes the condensation of pantoate with beta-alanine in an ATP-dependent reaction via a pantoyl-adenylate intermediate. The protein is Pantothenate synthetase of Neisseria meningitidis serogroup B (strain ATCC BAA-335 / MC58).